A 401-amino-acid polypeptide reads, in one-letter code: Tyrosine--tRNA ligase (401 aa).

The 'HIGH' region signature appears at 41-50 (PSRPDLHLGH). The 'KMSKS' region motif lies at 225-229 (KMSKS). An ATP-binding site is contributed by lysine 228. The S4 RNA-binding domain occupies 334–395 (KNIVDLLVEI…GKRKFYRISG (62 aa)).

This sequence belongs to the class-I aminoacyl-tRNA synthetase family. TyrS type 2 subfamily. Homodimer.

The protein resides in the cytoplasm. It carries out the reaction tRNA(Tyr) + L-tyrosine + ATP = L-tyrosyl-tRNA(Tyr) + AMP + diphosphate + H(+). Functionally, catalyzes the attachment of tyrosine to tRNA(Tyr) in a two-step reaction: tyrosine is first activated by ATP to form Tyr-AMP and then transferred to the acceptor end of tRNA(Tyr). This Thermotoga maritima (strain ATCC 43589 / DSM 3109 / JCM 10099 / NBRC 100826 / MSB8) protein is Tyrosine--tRNA ligase.